Consider the following 63-residue polypeptide: Large ribosomal subunit protein uL29 (63 aa).

The protein belongs to the universal ribosomal protein uL29 family.

This is Large ribosomal subunit protein uL29 from Idiomarina loihiensis (strain ATCC BAA-735 / DSM 15497 / L2-TR).